The chain runs to 407 residues: Frizzled/smoothened-like sans CRD protein J (407 aa).

An N-terminal signal peptide occupies residues 1-23 (MKFLFSVILVIISFLGISKIVNG). Residues 24–89 (QIACPSPFLY…WNSFNKLVKQ (66 aa)) are Extracellular-facing. N37 carries an N-linked (GlcNAc...) asparagine glycan. The chain crosses the membrane as a helical span at residues 90-110 (MGAVAFTCSAIIMIIYGPLMN). Residues 111-120 (RSFFKFDRHT) lie on the Cytoplasmic side of the membrane. The chain crosses the membrane as a helical span at residues 121 to 141 (ITVFCFALSTFFIGVSDLMFA). Residues 142–169 (TNDVDMVCPESHRYARQTDKTCATNGVL) lie on the Extracellular side of the membrane. The chain crosses the membrane as a helical span at residues 170 to 190 (FQFGWLGSVMWFAFLSIDGFF). Residues 191–199 (RASGKKMNK) lie on the Cytoplasmic side of the membrane. A helical transmembrane segment spans residues 200-220 (IAFAIVLASIWILNIVLSFAP). The Extracellular portion of the chain corresponds to 221-246 (MGGDQYGAYFVGQVNCWILVKNWQYA). The chain crosses the membrane as a helical span at residues 247–267 (FFWAELIVSLAIGFVGICLTI). At 268–285 (YSLIRKTSDGNTLKHVTP) the chain is on the cytoplasmic side. The chain crosses the membrane as a helical span at residues 286–306 (LILVFLLFCQYLYMIIFYGII). Topologically, residues 307 to 354 (NEKKDHYQNILAEQVGCIFNNALAKMKVPGIVYAGECTFNETITFSSQ) are extracellular. The N-linked (GlcNAc...) asparagine glycan is linked to N346. A helical membrane pass occupies residues 355–375 (YAFLFFVRLLGIEIFAFYLFS). Residues 376–407 (KETLLLIKSSYIATMFGLGDKDAYDVELEETD) are Cytoplasmic-facing.

It belongs to the G-protein coupled receptor Fz/Smo family.

The protein localises to the membrane. This is Frizzled/smoothened-like sans CRD protein J (fscJ) from Dictyostelium discoideum (Social amoeba).